The chain runs to 554 residues: Sesquiterpene synthase 14a (554 aa).

Asp-305, Asp-309, Asp-449, and Glu-457 together coordinate Mg(2+). The short motif at 305–309 (DDLYD) is the DDXXD motif element.

Belongs to the terpene synthase family. Tpsa subfamily. It depends on Mg(2+) as a cofactor. Mn(2+) is required as a cofactor. As to expression, mostly expressed in stem trichomes.

The catalysed reaction is (2E,6E)-farnesyl diphosphate = beta-bisabolene + diphosphate. It carries out the reaction (2E,6E)-farnesyl diphosphate = (Z)-alpha-bisabolene + diphosphate. The enzyme catalyses (2E,6E)-farnesyl diphosphate = beta-acoradiene + diphosphate. It catalyses the reaction (2E,6E)-farnesyl diphosphate = (E)-gamma-bisabolene + diphosphate. The catalysed reaction is (2E,6E)-farnesyl diphosphate = (E)-beta-farnesene + diphosphate. It carries out the reaction (2E,6E)-farnesyl diphosphate = (Z)-beta-farnesene + diphosphate. The enzyme catalyses (2E)-geranyl diphosphate = limonene + diphosphate. It catalyses the reaction (2E)-geranyl diphosphate = beta-myrcene + diphosphate. It functions in the pathway secondary metabolite biosynthesis; terpenoid biosynthesis. In terms of biological role, sesquiterpene synthase involved in the biosynthesis of volatile compounds. Mediates the conversion of (2E,6E)-farnesyl diphosphate ((EE)-FPP) into beta-bisabolene, beta-farnesene, (E)-gamma-bisabolene, beta-acoradiene, selinene and (Z)-alpha-bisabolene. Low or no activity with (2Z,6Z)-farnesyl diphosphate ((ZZ)-FPP). Can act with a low efficiency as a monoterpene synthase with geranyl diphosphate (GPP) as substrate, thus producing beta-myrcene and limonene. In Solanum habrochaites (Wild tomato), this protein is Sesquiterpene synthase 14a.